The following is a 377-amino-acid chain: Lactosylceramide 1,3-N-acetyl-beta-D-glucosaminyltransferase (377 aa).

At 1–12 (MLISARRLRRCQ) the chain is on the cytoplasmic side. Residues 13–30 (FFQLLTSCFVLSLMALLV) traverse the membrane as a helical; Signal-anchor for type II membrane protein segment. Residues 31 to 377 (QEDNSLINHV…DTYPCSAAWS (347 aa)) lie on the Lumenal side of the membrane. 3 N-linked (GlcNAc...) asparagine glycosylation sites follow: Asn-56, Asn-167, and Asn-275.

The protein belongs to the glycosyltransferase 31 family.

The protein resides in the golgi apparatus membrane. It carries out the reaction a beta-D-Gal-(1-&gt;4)-beta-D-Glc-(1&lt;-&gt;1)-Cer(d18:1(4E)) + UDP-N-acetyl-alpha-D-glucosamine = a beta-D-GlcNAc-(1-&gt;3)-beta-D-Gal-(1-&gt;4)-beta-D-Glc-(1&lt;-&gt;1)-Cer(d18:1(4E)) + UDP + H(+). The enzyme catalyses a neolactoside nLc4Cer(d18:1(4E)) + UDP-N-acetyl-alpha-D-glucosamine = a neolactoside IV(3)-beta-GlcNAc-nLc4Cer(d18:1(4E)) + UDP + H(+). Its pathway is protein modification; protein glycosylation. Its function is as follows. Beta-1,3-N-acetylglucosaminyltransferase that plays a key role in the synthesis of lacto- or neolacto-series carbohydrate chains on glycolipids. This chain is Lactosylceramide 1,3-N-acetyl-beta-D-glucosaminyltransferase (b3gnt5), found in Xenopus tropicalis (Western clawed frog).